The sequence spans 180 residues: Zinc finger protein 740 (180 aa).

A compositionally biased stretch (polar residues) spans 1-11; sequence MMLSQIASKQA. Positions 1 to 62 are disordered; sequence MMLSQIASKQ…KEDDSLAEAS (62 aa). K9 is covalently cross-linked (Glycyl lysine isopeptide (Lys-Gly) (interchain with G-Cter in SUMO2)). The residue at position 19 (S19) is a Phosphoserine. The span at 31-56 shows a compositional bias: basic and acidic residues; the sequence is CKPRFDLSSKGHRKDSDKSRNRKEDD. 2 consecutive C2H2-type zinc fingers follow at residues 88–110 and 116–138; these read FICE…VLIH and FECD…KRVH. The C2H2-type 3; atypical zinc-finger motif lies at 144 to 166; sequence YQCERCHQCFSRTDRLLRHKRMC.

The protein belongs to the krueppel C2H2-type zinc-finger protein family.

It localises to the nucleus. Its function is as follows. May be involved in transcriptional regulation. The sequence is that of Zinc finger protein 740 (Znf740) from Mus musculus (Mouse).